Reading from the N-terminus, the 65-residue chain is Large ribosomal subunit protein bL35 (65 aa).

Belongs to the bacterial ribosomal protein bL35 family.

This chain is Large ribosomal subunit protein bL35, found in Thermotoga petrophila (strain ATCC BAA-488 / DSM 13995 / JCM 10881 / RKU-1).